Here is a 725-residue protein sequence, read N- to C-terminus: Malate synthase G 2 (725 aa).

Acetyl-CoA is bound by residues Val-118, 125–126 (RY), Ser-276, and Arg-313. Arg-340 functions as the Proton acceptor in the catalytic mechanism. Glyoxylate-binding positions include Arg-340, Glu-429, and 454–457 (GFLD). 2 residues coordinate Mg(2+): Glu-429 and Asp-457. Residue Pro-538 coordinates acetyl-CoA. Residue Cys-619 is modified to Cysteine sulfenic acid (-SOH). The Proton donor role is filled by Asp-633.

Belongs to the malate synthase family. GlcB subfamily. As to quaternary structure, monomer. Mg(2+) is required as a cofactor.

The protein localises to the cytoplasm. The enzyme catalyses glyoxylate + acetyl-CoA + H2O = (S)-malate + CoA + H(+). It participates in carbohydrate metabolism; glyoxylate cycle; (S)-malate from isocitrate: step 2/2. Functionally, involved in the glycolate utilization. Catalyzes the condensation and subsequent hydrolysis of acetyl-coenzyme A (acetyl-CoA) and glyoxylate to form malate and CoA. The chain is Malate synthase G 2 from Pseudomonas syringae pv. tomato (strain ATCC BAA-871 / DC3000).